A 467-amino-acid polypeptide reads, in one-letter code: Methionine aminopeptidase 2-1 (467 aa).

The segment covering 1 to 10 (MGSKSPDGHR) has biased composition (basic and acidic residues). The disordered stretch occupies residues 1–105 (MGSKSPDGHR…TPPRVSLPSI (105 aa)). Positions 43–55 (DGDDEDEDGDDDG) are enriched in acidic residues. Residues 75-90 (KKRKRKSNKKKKKKTS) are compositionally biased toward basic residues. Residue H219 coordinates substrate. A divalent metal cation-binding residues include D240, D251, and H320. H328 is a binding site for substrate. 2 residues coordinate a divalent metal cation: E353 and E448.

Belongs to the peptidase M24A family. Methionine aminopeptidase eukaryotic type 2 subfamily. It depends on Co(2+) as a cofactor. Zn(2+) serves as cofactor. Mn(2+) is required as a cofactor. The cofactor is Fe(2+).

Its subcellular location is the cytoplasm. It catalyses the reaction Release of N-terminal amino acids, preferentially methionine, from peptides and arylamides.. Functionally, cotranslationally removes the N-terminal methionine from nascent proteins. The N-terminal methionine is often cleaved when the second residue in the primary sequence is small and uncharged (Met-Ala-, Cys, Gly, Pro, Ser, Thr, or Val). The chain is Methionine aminopeptidase 2-1 from Arthroderma gypseum (strain ATCC MYA-4604 / CBS 118893) (Microsporum gypseum).